Reading from the N-terminus, the 257-residue chain is MYRKFGMAAMLVSILLLMTGCFNVNEPINAQSEGIWDSYFVYPLSWLMIYFANAFNGSFGLAIIVVTLLIRLLILPLMIKQLKSTRAMQALQPEMQALREKYSAKDQRTQQKLQQETMALFQKHGVNPLAGCFPVLIQMPILLAFYHAIMRTREIGDEHFLWFVLNQPDPILLPIIAGITTFLQQKMMMVTDNPQMKVLLYVMPVMILVFAMFLPSSLALYWVIGNLFMILQTYFITGPNVGAKKVAADVKVGGKKK.

An N-terminal signal peptide occupies residues 1–20 (MYRKFGMAAMLVSILLLMTG). Cysteine 21 carries N-palmitoyl cysteine lipidation. Cysteine 21 is lipidated: S-diacylglycerol cysteine. 5 helical membrane passes run 35 to 55 (IWDS…ANAF), 59 to 79 (FGLA…PLMI), 129 to 149 (LAGC…YHAI), 160 to 180 (FLWF…AGIT), and 205 to 225 (VMIL…WVIG).

The protein belongs to the OXA1/ALB3/YidC family. Type 2 subfamily.

The protein localises to the cell membrane. Functionally, required for the insertion and/or proper folding and/or complex formation of integral membrane proteins into the membrane. Involved in integration of membrane proteins that insert both dependently and independently of the Sec translocase complex, as well as at least some lipoproteins. This Halalkalibacterium halodurans (strain ATCC BAA-125 / DSM 18197 / FERM 7344 / JCM 9153 / C-125) (Bacillus halodurans) protein is Membrane protein insertase YidC 1.